Consider the following 365-residue polypeptide: Alanine racemase (365 aa).

Lysine 35 functions as the Proton acceptor; specific for D-alanine in the catalytic mechanism. Lysine 35 bears the N6-(pyridoxal phosphate)lysine mark. Arginine 130 provides a ligand contact to substrate. Residue tyrosine 256 is the Proton acceptor; specific for L-alanine of the active site. Methionine 304 is a binding site for substrate.

Belongs to the alanine racemase family. The cofactor is pyridoxal 5'-phosphate.

The enzyme catalyses L-alanine = D-alanine. The protein operates within amino-acid biosynthesis; D-alanine biosynthesis; D-alanine from L-alanine: step 1/1. Catalyzes the interconversion of L-alanine and D-alanine. May also act on other amino acids. The chain is Alanine racemase (alr) from Acidovorax ebreus (strain TPSY) (Diaphorobacter sp. (strain TPSY)).